The following is a 361-amino-acid chain: MASRSLNGDSDIVKPRKIALVTGITGQDGSYLTEFLLEKGYEVHGLIRRSSNFNTQRLNHIYVDPHNVNKALMKLHYGDLSDASSLRRWLDVIKPDEVYNLAAQSHVAVSFEIPDYTADVVATGALRLLEAVRSHNIDNGRAIKYYQAGSSEMFGSTPPPQSETTPFHPRSPYAASKCAAHWYTVNYREAYGLYACNGILFNHESPRRGENFVTRKITRALGRIKVGLQTKLFLGNIQASRDWGFAGDYVEAMWLMLQQEKPDDYVVATEESHTVKEFLDVSFGYVGLNWKDHVEIDKRYFRPTEVDNLKGDASKAKEMLGWKPKVGFEKLVKMMVDEDLELAKREKVLADAGYMDAQQQP.

NADP(+) contacts are provided by residues 23–28 (GITGQD), 79–80 (DL), 101–105 (LAAQS), and Tyr-116. Residue Ser-150 is part of the active site. Residues Glu-152 and Tyr-173 each act as nucleophile in the active site. Positions 177, 203, and 208 each coordinate NADP(+).

This sequence belongs to the NAD(P)-dependent epimerase/dehydratase family. GDP-mannose 4,6-dehydratase subfamily. As to quaternary structure, homotetramer. It depends on NADP(+) as a cofactor. As to expression, expressed in roots,stipules and pollen just before anthesis. Primarily localized to the root meristem and columella root cap. Not expressed in emerging lateral roots.

It carries out the reaction GDP-alpha-D-mannose = GDP-4-dehydro-alpha-D-rhamnose + H2O. The protein operates within nucleotide-sugar biosynthesis; GDP-L-fucose biosynthesis via de novo pathway; GDP-L-fucose from GDP-alpha-D-mannose: step 1/2. Catalyzes the conversion of GDP-D-mannose to GDP-4-dehydro-6-deoxy-D-mannose. This is GDP-mannose 4,6 dehydratase 1 (GMD1) from Arabidopsis thaliana (Mouse-ear cress).